Consider the following 386-residue polypeptide: Paralemmin-1 (386 aa).

Positions 4–115 (VEANTLQQER…TKENLAEAAA (112 aa)) form a coiled coil. Disordered stretches follow at residues 21–40 (RKRQTEIENKRRQLEDDRRQ), 51–149 (ERWL…PMKA), 240–290 (EATA…TMIF), and 321–378 (DAES…AKKQ). Basic and acidic residues-rich tracts occupy residues 24-40 (QTEIENKRRQLEDDRRQ) and 68-95 (AMKKQMQEDEVKTKELEETIQRLERELE). The segment covering 97–116 (LENSSSVTSTKENLAEAAAP) has biased composition (low complexity). Basic and acidic residues-rich tracts occupy residues 259–282 (PRREITGLQAKPRENSTEGAEPSR), 322–334 (AESKAEPEGKDHA), and 365–377 (EAKEAEPDMDAKK). S-palmitoyl cysteine attachment occurs at residues C380 and C382. Residue C383 is modified to Cysteine methyl ester. The S-farnesyl cysteine moiety is linked to residue C383. Positions 384–386 (TVM) are cleaved as a propeptide — removed in mature form.

Belongs to the paralemmin family. In terms of assembly, interacts with dopamine receptor DRD3. Post-translationally, phosphorylated. As to expression, expressed in the lens (at protein level). Highly expressed in forebrain and cerebellum with lower expression in adrenal gland and heart. Expression weak or undetectable in other tissues.

The protein resides in the cell membrane. It is found in the cell projection. The protein localises to the filopodium membrane. It localises to the axon. Its subcellular location is the dendrite. The protein resides in the dendritic spine. It is found in the basolateral cell membrane. The protein localises to the apicolateral cell membrane. Functionally, involved in plasma membrane dynamics and cell process formation. Isoform 1 and isoform 2 are necessary for axonal and dendritic filopodia induction, for dendritic spine maturation and synapse formation in a palmitoylation-dependent manner. This is Paralemmin-1 (PALM) from Gallus gallus (Chicken).